We begin with the raw amino-acid sequence, 275 residues long: Large ribosomal subunit protein uL2 (275 aa).

Disordered regions lie at residues 36–55 (PKKR…RHKG) and 223–275 (VVMN…RHAR).

This sequence belongs to the universal ribosomal protein uL2 family. As to quaternary structure, part of the 50S ribosomal subunit. Forms a bridge to the 30S subunit in the 70S ribosome.

Functionally, one of the primary rRNA binding proteins. Required for association of the 30S and 50S subunits to form the 70S ribosome, for tRNA binding and peptide bond formation. It has been suggested to have peptidyltransferase activity; this is somewhat controversial. Makes several contacts with the 16S rRNA in the 70S ribosome. This chain is Large ribosomal subunit protein uL2, found in Thiobacillus denitrificans (strain ATCC 25259 / T1).